Consider the following 1355-residue polypeptide: Probable major glycoprotein (1355 aa).

The first 16 residues, 1 to 16 (MKKTMLAIILIPLVYA), serve as a signal peptide directing secretion. Residues Asn-81, Asn-112, Asn-129, Asn-169, Asn-173, Asn-192, Asn-542, Asn-655, Asn-682, Asn-744, Asn-780, Asn-811, Asn-815, Asn-860, Asn-865, Asn-882, Asn-895, Asn-1213, Asn-1225, Asn-1267, and Asn-1274 are each glycosylated (N-linked (GlcNAc...) asparagine; by host). Residues 1245–1299 (QIVSMEMEIQDLKLELIQLQKINTSVHMENITGDIDAMKATIEEYRAEMAKLRVT) adopt a coiled-coil conformation. Residues 1308–1328 (FIYAILGVIAIGALIAIIFMA) traverse the membrane as a helical segment.

The protein localises to the host membrane. The polypeptide is Probable major glycoprotein (ORF46) (Ictaluridae (bullhead catfishes)).